The primary structure comprises 59 residues: Ribosome biogenesis protein Nop10 (59 aa).

Belongs to the NOP10 family.

Functionally, involved in ribosome biogenesis; more specifically in 18S rRNA pseudouridylation and in cleavage of pre-rRNA. This Thermococcus sibiricus (strain DSM 12597 / MM 739) protein is Ribosome biogenesis protein Nop10.